The following is a 247-amino-acid chain: Disease resistance protein BAK6 (247 aa).

The first 24 residues, 1–24, serve as a signal peptide directing secretion; sequence MAAVQFAAAGVLTGLLALATLASC. Asn-66, Asn-104, and Asn-113 each carry an N-linked (GlcNAc...) asparagine glycan. LRR repeat units follow at residues 90–114, 116–138, 139–161, 162–186, 188–210, and 213–237; these read LESL…LGNL, DLIS…LGSI, STLR…SFGN, LTSL…LGNI, SLQF…VLSL, and VGNL…GLRV. 2 N-linked (GlcNAc...) asparagine glycosylation sites follow: Asn-150 and Asn-161. The N-linked (GlcNAc...) asparagine glycan is linked to Asn-215.

As to quaternary structure, interacts with WAK17 isoform 1; the interaction is direct. (Microbial infection) Interacts with G.zeae CFEM1; the interaction is direct. Interacts with G.zeae CFEMN1; the interaction is direct. Interacts with G.zeae CFEM5; the interaction is direct.

Its function is as follows. Contributes to activation of the hypersensitive response, a form of programmed cell death, upon fungal infection. May sense the presence of fungal material and relay the signal to WAK17 isoform 1. The protein is Disease resistance protein BAK6 of Zea mays (Maize).